The primary structure comprises 89 residues: Small ribosomal subunit protein uS15 (89 aa).

Belongs to the universal ribosomal protein uS15 family. As to quaternary structure, part of the 30S ribosomal subunit. Forms a bridge to the 50S subunit in the 70S ribosome, contacting the 23S rRNA.

Functionally, one of the primary rRNA binding proteins, it binds directly to 16S rRNA where it helps nucleate assembly of the platform of the 30S subunit by binding and bridging several RNA helices of the 16S rRNA. Forms an intersubunit bridge (bridge B4) with the 23S rRNA of the 50S subunit in the ribosome. The chain is Small ribosomal subunit protein uS15 from Acidiphilium cryptum (strain JF-5).